Reading from the N-terminus, the 264-residue chain is uncharacterized protein (264 aa).

A coiled-coil region spans residues 19 to 45 (AQEESMEQLKDINTKIDNSEKKISLEN).

This is an uncharacterized protein from Acanthamoeba polyphaga mimivirus (APMV).